Consider the following 368-residue polypeptide: Agmatine deiminase (368 aa).

Residue Cys-357 is the Amidino-cysteine intermediate of the active site.

The protein belongs to the agmatine deiminase family. In terms of assembly, homodimer.

The enzyme catalyses agmatine + H2O = N-carbamoylputrescine + NH4(+). Its pathway is amine and polyamine biosynthesis; putrescine biosynthesis via agmatine pathway; N-carbamoylputrescine from agmatine: step 1/1. In terms of biological role, mediates the hydrolysis of agmatine into N-carbamoylputrescine in the arginine decarboxylase (ADC) pathway of putrescine biosynthesis, a basic polyamine. The sequence is that of Agmatine deiminase from Pseudomonas aeruginosa (strain UCBPP-PA14).